Reading from the N-terminus, the 527-residue chain is uncharacterized protein (527 aa).

One can recognise a PE domain in the interval 1 to 93 (MSYMIAVPDM…AGAYASAEAT (93 aa)). 3 stretches are compositionally biased toward gly residues: residues 264–286 (IHGHGGVGGDGGTGGQGGDGVQG), 292–384 (GAAG…AGNG), and 472–515 (NGGD…GGSR). 2 disordered regions span residues 264 to 384 (IHGH…AGNG) and 472 to 527 (NGGD…TPGQ).

The protein belongs to the mycobacterial PE family. PGRS subfamily.

This is an uncharacterized protein from Mycobacterium tuberculosis (strain CDC 1551 / Oshkosh).